We begin with the raw amino-acid sequence, 147 residues long: UPF0306 protein YhbP (147 aa).

This sequence belongs to the UPF0306 family.

The chain is UPF0306 protein YhbP from Escherichia coli (strain SMS-3-5 / SECEC).